The chain runs to 736 residues: Subtilisin-like protease SBT1.9 (736 aa).

The signal sequence occupies residues 1-20 (MGMTVVIILVFSFFVAIVTA). The propeptide at 21–101 (ETSPYIIHMD…FTKDLPVKLH (81 aa)) is activation peptide. Residues 25 to 101 (YIIHMDLSAK…FTKDLPVKLH (77 aa)) form the Inhibitor I9 domain. Residues 103–582 (TFSPKFIGLN…AGHVSTNKVL (480 aa)) enclose the Peptidase S8 domain. An N-linked (GlcNAc...) asparagine glycan is attached at Asn-112. The active-site Charge relay system is the Asp-133. The N-linked (GlcNAc...) asparagine glycan is linked to Asn-162. His-205 acts as the Charge relay system in catalysis. Asn-220, Asn-381, and Asn-453 each carry an N-linked (GlcNAc...) asparagine glycan. Positions 367 to 441 (VQFPVTYIES…VAFIGSKHRE (75 aa)) constitute a PA domain. The active-site Charge relay system is Ser-529. The N-linked (GlcNAc...) asparagine glycan is linked to Asn-617.

This sequence belongs to the peptidase S8 family.

It localises to the secreted. The protein is Subtilisin-like protease SBT1.9 of Arabidopsis thaliana (Mouse-ear cress).